Here is a 448-residue protein sequence, read N- to C-terminus: Asparagine--tRNA ligase (448 aa).

It belongs to the class-II aminoacyl-tRNA synthetase family. Homodimer.

Its subcellular location is the cytoplasm. It catalyses the reaction tRNA(Asn) + L-asparagine + ATP = L-asparaginyl-tRNA(Asn) + AMP + diphosphate + H(+). This is Asparagine--tRNA ligase from Streptococcus pyogenes serotype M4 (strain MGAS10750).